The chain runs to 239 residues: Uridylate kinase (239 aa).

Residue 13–16 (KVSG) coordinates ATP. Residue Gly55 participates in UMP binding. ATP-binding residues include Gly56 and Arg60. UMP contacts are provided by residues Asp75 and 136–143 (TGNPFFTT). ATP is bound by residues Thr163, Gln164, Tyr169, and Asp172.

The protein belongs to the UMP kinase family. In terms of assembly, homohexamer.

The protein localises to the cytoplasm. It catalyses the reaction UMP + ATP = UDP + ADP. The protein operates within pyrimidine metabolism; CTP biosynthesis via de novo pathway; UDP from UMP (UMPK route): step 1/1. Inhibited by UTP. Functionally, catalyzes the reversible phosphorylation of UMP to UDP. In Bartonella bacilliformis (strain ATCC 35685 / KC583 / Herrer 020/F12,63), this protein is Uridylate kinase.